We begin with the raw amino-acid sequence, 686 residues long: Band 4.1-like protein 4A (686 aa).

The FERM domain maps to 11-299 (FYCEVLLLDE…EHHTFFRMPE (289 aa)). Position 304 is a phosphoserine (S304). The interval 331-686 (RDLSIQLPRP…IQASRLKTET (356 aa)) is disordered. A compositionally biased stretch (polar residues) spans 357 to 376 (AQTQPAESNSISRITANMEN). Phosphoserine occurs at positions 389, 393, and 402. The segment covering 418-428 (GPQSGLYNSPS) has biased composition (polar residues). Residues 479-489 (RCNTSSGSESE) are compositionally biased toward low complexity. 2 stretches are compositionally biased toward basic and acidic residues: residues 518-527 (VLRRQKEKNQ) and 547-561 (QAKE…KELV). Residues 588–601 (IRHSHSPRSYRQYR) show a composition bias toward basic residues. Positions 648 to 658 (GSKDSLMEEKP) are enriched in basic and acidic residues. Over residues 673–686 (TIKTIQASRLKTET) the composition is skewed to polar residues.

Expressed in many tissues. High levels of expression in brain, liver, thymus and peripheral blood leukocytes and low levels of expression in heart, kidney, testis and colon.

The protein resides in the cytoplasm. The protein localises to the cytoskeleton. This is Band 4.1-like protein 4A from Homo sapiens (Human).